Reading from the N-terminus, the 172-residue chain is Protein GrpE (172 aa).

It belongs to the GrpE family. In terms of assembly, homodimer.

It is found in the cytoplasm. Its function is as follows. Participates actively in the response to hyperosmotic and heat shock by preventing the aggregation of stress-denatured proteins, in association with DnaK and GrpE. It is the nucleotide exchange factor for DnaK and may function as a thermosensor. Unfolded proteins bind initially to DnaJ; upon interaction with the DnaJ-bound protein, DnaK hydrolyzes its bound ATP, resulting in the formation of a stable complex. GrpE releases ADP from DnaK; ATP binding to DnaK triggers the release of the substrate protein, thus completing the reaction cycle. Several rounds of ATP-dependent interactions between DnaJ, DnaK and GrpE are required for fully efficient folding. The polypeptide is Protein GrpE (Thermotoga maritima (strain ATCC 43589 / DSM 3109 / JCM 10099 / NBRC 100826 / MSB8)).